We begin with the raw amino-acid sequence, 786 residues long: Endonuclease MutS2 (786 aa).

Glycine 332–threonine 339 lines the ATP pocket. Positions valine 710–lysine 785 constitute a Smr domain.

It belongs to the DNA mismatch repair MutS family. MutS2 subfamily. In terms of assembly, homodimer. Binds to stalled ribosomes, contacting rRNA.

Endonuclease that is involved in the suppression of homologous recombination and thus may have a key role in the control of bacterial genetic diversity. Its function is as follows. Acts as a ribosome collision sensor, splitting the ribosome into its 2 subunits. Detects stalled/collided 70S ribosomes which it binds and splits by an ATP-hydrolysis driven conformational change. Acts upstream of the ribosome quality control system (RQC), a ribosome-associated complex that mediates the extraction of incompletely synthesized nascent chains from stalled ribosomes and their subsequent degradation. Probably generates substrates for RQC. In Clostridium beijerinckii (strain ATCC 51743 / NCIMB 8052) (Clostridium acetobutylicum), this protein is Endonuclease MutS2.